The following is a 920-amino-acid chain: Probable transport protein MmpL7 (920 aa).

Transmembrane regions (helical) follow at residues 44–64, 210–230, 241–261, 271–291, 311–331, 344–364, 389–409, 761–781, 790–810, 822–842, 864–884, and 888–908; these read LLVV…LTFT, ITAW…VLLL, AIVL…AAVV, VFSW…ATML, LPAF…LLLA, LGVF…IALA, SASA…IIGM, LIHD…LASM, AVGV…IALW, VPLV…VAGI, GAVA…VLVS, and FSVL…LITV.

It belongs to the resistance-nodulation-cell division (RND) (TC 2.A.6) family. MmpL subfamily.

Its subcellular location is the cell membrane. This Mycobacterium bovis (strain ATCC BAA-935 / AF2122/97) protein is Probable transport protein MmpL7 (mmpL7).